Here is a 443-residue protein sequence, read N- to C-terminus: Chromosomal replication initiator protein DnaA (443 aa).

The tract at residues 1-67 (MDAWSRSLER…RELLAHFAGF (67 aa)) is domain I, interacts with DnaA modulators. The domain II stretch occupies residues 67 to 105 (FSDVFLEIGSRPRPVEAQNAPVSTPSAHVSSEPQVPFAG). A domain III, AAA+ region region spans residues 106–323 (NLDNHYTFAN…GALNTLTARA (218 aa)). ATP-binding residues include Gly-151, Gly-153, Lys-154, and Thr-155. The domain IV, binds dsDNA stretch occupies residues 324 to 443 (NFTGRAITTE…WDKLIRKLSE (120 aa)).

Belongs to the DnaA family. In terms of assembly, oligomerizes as a right-handed, spiral filament on DNA at oriC.

Its subcellular location is the cytoplasm. Functionally, plays an essential role in the initiation and regulation of chromosomal replication. ATP-DnaA binds to the origin of replication (oriC) to initiate formation of the DNA replication initiation complex once per cell cycle. Binds the DnaA box (a 9 base pair repeat at the origin) and separates the double-stranded (ds)DNA. Forms a right-handed helical filament on oriC DNA; dsDNA binds to the exterior of the filament while single-stranded (ss)DNA is stabiized in the filament's interior. The ATP-DnaA-oriC complex binds and stabilizes one strand of the AT-rich DNA unwinding element (DUE), permitting loading of DNA polymerase. After initiation quickly degrades to an ADP-DnaA complex that is not apt for DNA replication. Binds acidic phospholipids. This Stenotrophomonas maltophilia (strain K279a) protein is Chromosomal replication initiator protein DnaA.